A 428-amino-acid polypeptide reads, in one-letter code: MDTEQDAKSEERQQWKLEKDTELRVEVAEGDREAIIVLLSGNAEVFGTELVKNKKFTFRPGSKLAIFTWQGCSVEIQGPLEVAYKSKETPMVMYLNLHMALEQMRERADKHEAVELGPRVMVVGPTDVGKSTVCQLLLNYAVRMGRRPISVDLDVGQGTASVPGSMGALLLERPADIEEGFSLQAPLVYLFGHTSPSPNEKLYNMLSSKIADIVFQRFERNKKACASGCVINTCGWVTGMGYRIIVHAATAFKVNVIVVLDQERLYNDLKNQFGDKVQIVHLPKSGGVVVRSRETRRKVRDERLRSYFYGQQANLYPHSFEVKFSDVKLFKIGAPLVPDSCLPLGMDQGQNETKLVPVVPTKDLKHCLLAISAAESLEEDLVQTNVIGFLVVNEVDLDREVMVVLSPAPRPLPRKFLLLSEIKFMDFK.

Residues Glu-22, Lys-63, and 127-132 (DVGKST) contribute to the ATP site.

Belongs to the Clp1 family. Clp1 subfamily.

The protein resides in the nucleus. Its function is as follows. Required for endonucleolytic cleavage during polyadenylation-dependent pre-mRNA 3'-end formation. This chain is Protein CLP1 homolog, found in Nematostella vectensis (Starlet sea anemone).